A 427-amino-acid polypeptide reads, in one-letter code: Light-independent protochlorophyllide reductase subunit N (427 aa).

[4Fe-4S] cluster-binding residues include Cys32, Cys57, and Cys118.

It belongs to the BchN/ChlN family. As to quaternary structure, protochlorophyllide reductase is composed of three subunits; BchL, BchN and BchB. Forms a heterotetramer of two BchB and two BchN subunits. The cofactor is [4Fe-4S] cluster.

The catalysed reaction is chlorophyllide a + oxidized 2[4Fe-4S]-[ferredoxin] + 2 ADP + 2 phosphate = protochlorophyllide a + reduced 2[4Fe-4S]-[ferredoxin] + 2 ATP + 2 H2O. It functions in the pathway porphyrin-containing compound metabolism; bacteriochlorophyll biosynthesis (light-independent). Its function is as follows. Component of the dark-operative protochlorophyllide reductase (DPOR) that uses Mg-ATP and reduced ferredoxin to reduce ring D of protochlorophyllide (Pchlide) to form chlorophyllide a (Chlide). This reaction is light-independent. The NB-protein (BchN-BchB) is the catalytic component of the complex. This Rubrivivax gelatinosus (strain NBRC 100245 / IL144) protein is Light-independent protochlorophyllide reductase subunit N.